A 172-amino-acid chain; its full sequence is Ribosome maturation factor RimP (172 aa).

It belongs to the RimP family.

Its subcellular location is the cytoplasm. Its function is as follows. Required for maturation of 30S ribosomal subunits. In Chlorobium phaeovibrioides (strain DSM 265 / 1930) (Prosthecochloris vibrioformis (strain DSM 265)), this protein is Ribosome maturation factor RimP.